The sequence spans 296 residues: UDP-N-acetylenolpyruvoylglucosamine reductase (296 aa).

Positions 19–203 (KVGGFAEYFS…LETTQKNLKK (185 aa)) constitute an FAD-binding PCMH-type domain. Arg-166 is a catalytic residue. Ser-217 acts as the Proton donor in catalysis. Glu-287 is an active-site residue.

The protein belongs to the MurB family. It depends on FAD as a cofactor.

It is found in the cytoplasm. The catalysed reaction is UDP-N-acetyl-alpha-D-muramate + NADP(+) = UDP-N-acetyl-3-O-(1-carboxyvinyl)-alpha-D-glucosamine + NADPH + H(+). Its pathway is cell wall biogenesis; peptidoglycan biosynthesis. In terms of biological role, cell wall formation. The sequence is that of UDP-N-acetylenolpyruvoylglucosamine reductase from Prochlorococcus marinus subsp. pastoris (strain CCMP1986 / NIES-2087 / MED4).